Consider the following 197-residue polypeptide: Xanthine phosphoribosyltransferase (197 aa).

Positions 20 and 27 each coordinate xanthine. A 5-phospho-alpha-D-ribose 1-diphosphate-binding site is contributed by 128-132 (ANGQA). A xanthine-binding site is contributed by K156.

The protein belongs to the purine/pyrimidine phosphoribosyltransferase family. Xpt subfamily. Homodimer.

It is found in the cytoplasm. It catalyses the reaction XMP + diphosphate = xanthine + 5-phospho-alpha-D-ribose 1-diphosphate. It participates in purine metabolism; XMP biosynthesis via salvage pathway; XMP from xanthine: step 1/1. In terms of biological role, converts the preformed base xanthine, a product of nucleic acid breakdown, to xanthosine 5'-monophosphate (XMP), so it can be reused for RNA or DNA synthesis. The sequence is that of Xanthine phosphoribosyltransferase from Bacillus cereus (strain G9842).